The chain runs to 173 residues: Aliphatic sulfonate oxidoreductase, polyferredoxin-like subunit (173 aa).

4Fe-4S ferredoxin-type domains follow at residues 9–40 (IWIL…WPEA), 48–80 (LFPG…VDEK), and 82–111 (GAVV…IPAG). Residues C18, C21, C24, C28, C58, C61, C66, C70, C91, C94, C97, C101, C118, C121, C127, and C131 each coordinate [4Fe-4S] cluster.

Heterodimer composed of a small WOR5-S subunit, with four [4Fe-4S] clusters, and a large WOR5-L subunit, containing the active site tungsto-bispyranopterin cofactor as well as another [4Fe-4S] cluster. [4Fe-4S] cluster is required as a cofactor.

Its subcellular location is the cytoplasm. In terms of biological role, polyferredoxin-like subunit of an oxidoreductase that can desulfonate and oxidize aliphatic sulfonates such as taurine. May serve as a an electron-transfer subunit between the catalytic subunit and ferredoxin. This chain is Aliphatic sulfonate oxidoreductase, polyferredoxin-like subunit, found in Pyrococcus furiosus (strain ATCC 43587 / DSM 3638 / JCM 8422 / Vc1).